The sequence spans 300 residues: 4-hydroxy-tetrahydrodipicolinate synthase (300 aa).

Residue T46 participates in pyruvate binding. Y135 serves as the catalytic Proton donor/acceptor. The active-site Schiff-base intermediate with substrate is K163. V205 provides a ligand contact to pyruvate.

Belongs to the DapA family. In terms of assembly, homotetramer; dimer of dimers.

It is found in the cytoplasm. The enzyme catalyses L-aspartate 4-semialdehyde + pyruvate = (2S,4S)-4-hydroxy-2,3,4,5-tetrahydrodipicolinate + H2O + H(+). The protein operates within amino-acid biosynthesis; L-lysine biosynthesis via DAP pathway; (S)-tetrahydrodipicolinate from L-aspartate: step 3/4. Catalyzes the condensation of (S)-aspartate-beta-semialdehyde [(S)-ASA] and pyruvate to 4-hydroxy-tetrahydrodipicolinate (HTPA). In Koribacter versatilis (strain Ellin345), this protein is 4-hydroxy-tetrahydrodipicolinate synthase.